A 447-amino-acid chain; its full sequence is MTLENNMDKKLFCISTYGCQMNEEDSEKLSGMLKSQGYERTENKEEASIIIFNTCCVRENAENKVFGNLGQLKQLKKKNPNLVIAICGCMMQQVGMADKVLKTFPYVDIIFGTHNAHKFPEYLHRVLQEGVQVKEILNKEEGIVEGLPIDRKSDVKAFVTIMYGCNNFCTYCIVPYVRGRERSRKSEDIIKEIEELVSKGYKEITLLGQNVNSYGKGLEEDIDFAGLLRKVNEVKGLERVRFMTSHPKDLSDDVIMAIKECDKLCEQVHLPVQSGSSRILKEMNRHYDREYYLDLVKKIKSEIPDVTLTTDIIIGFPGETEEDFLDTLSLCEEVGYDSAFTFIYSRRNHTPADKMENQIPDDIKHDRFNRLVEAINKKVVIKNKEYEGKVVEVLVEGPSKNDETKLTGRTRNGKLVNFAGDEKLVGELVNLKIVRAQPFSLIGEIVE.

The MTTase N-terminal domain maps to 10–128; sequence KLFCISTYGC…FPEYLHRVLQ (119 aa). Residues C19, C55, C89, C165, C169, and C172 each coordinate [4Fe-4S] cluster. The 232-residue stretch at 151–382 folds into the Radical SAM core domain; it reads RKSDVKAFVT…EAINKKVVIK (232 aa). In terms of domain architecture, TRAM spans 384–447; it reads KEYEGKVVEV…PFSLIGEIVE (64 aa).

Belongs to the methylthiotransferase family. MiaB subfamily. Monomer. [4Fe-4S] cluster is required as a cofactor.

The protein resides in the cytoplasm. It catalyses the reaction N(6)-dimethylallyladenosine(37) in tRNA + (sulfur carrier)-SH + AH2 + 2 S-adenosyl-L-methionine = 2-methylsulfanyl-N(6)-dimethylallyladenosine(37) in tRNA + (sulfur carrier)-H + 5'-deoxyadenosine + L-methionine + A + S-adenosyl-L-homocysteine + 2 H(+). Functionally, catalyzes the methylthiolation of N6-(dimethylallyl)adenosine (i(6)A), leading to the formation of 2-methylthio-N6-(dimethylallyl)adenosine (ms(2)i(6)A) at position 37 in tRNAs that read codons beginning with uridine. The polypeptide is tRNA-2-methylthio-N(6)-dimethylallyladenosine synthase (Clostridium perfringens (strain SM101 / Type A)).